The sequence spans 313 residues: Aspartate carbamoyltransferase catalytic subunit (313 aa).

The carbamoyl phosphate site is built by Arg-59 and Thr-60. Position 87 (Lys-87) interacts with L-aspartate. Residues Arg-109, His-137, and Gln-140 each contribute to the carbamoyl phosphate site. Positions 170 and 224 each coordinate L-aspartate. The carbamoyl phosphate site is built by Gly-265 and Pro-266.

Belongs to the aspartate/ornithine carbamoyltransferase superfamily. ATCase family. Heterododecamer (2C3:3R2) of six catalytic PyrB chains organized as two trimers (C3), and six regulatory PyrI chains organized as three dimers (R2).

It carries out the reaction carbamoyl phosphate + L-aspartate = N-carbamoyl-L-aspartate + phosphate + H(+). Its pathway is pyrimidine metabolism; UMP biosynthesis via de novo pathway; (S)-dihydroorotate from bicarbonate: step 2/3. Functionally, catalyzes the condensation of carbamoyl phosphate and aspartate to form carbamoyl aspartate and inorganic phosphate, the committed step in the de novo pyrimidine nucleotide biosynthesis pathway. This is Aspartate carbamoyltransferase catalytic subunit from Sinorhizobium medicae (strain WSM419) (Ensifer medicae).